A 597-amino-acid chain; its full sequence is Arginine--tRNA ligase (597 aa).

A compositionally biased stretch (low complexity) spans 23 to 32; sequence QAAAARQASQ. A disordered region spans residues 23–43; sequence QAAAARQASQPLDPQLAPASK. The 'HIGH' region signature appears at 137–147; the sequence is PNIAKEMHVGH.

Belongs to the class-I aminoacyl-tRNA synthetase family. As to quaternary structure, monomer.

It localises to the cytoplasm. It catalyses the reaction tRNA(Arg) + L-arginine + ATP = L-arginyl-tRNA(Arg) + AMP + diphosphate. This is Arginine--tRNA ligase from Synechococcus sp. (strain WH7803).